Consider the following 966-residue polypeptide: Aminopeptidase N (966 aa).

Residues 1–8 (MAKGFYIS) are Cytoplasmic-facing. A helical; Signal-anchor for type II membrane protein transmembrane segment spans residues 9-32 (KTLGILGILLGVAAVCTIIALSVV). Positions 33–68 (YAQEKNRNAENSATAPTLPGSTSATTATTTPAVDES) are cytosolic Ser/Thr-rich junction. At 33–966 (YAQEKNRNAE…VFKWFTENSS (934 aa)) the chain is on the extracellular side. The interval 42–64 (ENSATAPTLPGSTSATTATTTPA) is disordered. The segment covering 44 to 64 (SATAPTLPGSTSATTATTTPA) has biased composition (low complexity). The interval 69 to 966 (KPWNQYRLPK…VFKWFTENSS (898 aa)) is metalloprotease. 3 N-linked (GlcNAc...) asparagine glycosylation sites follow: Asn106, Asn114, and Asn128. The residue at position 176 (Tyr176) is a Sulfotyrosine. Asn234, Asn288, Asn318, and Asn332 each carry an N-linked (GlcNAc...) asparagine glycan. Substrate is bound at residue 351-355 (GAMEN). His387 provides a ligand contact to Zn(2+). The Proton acceptor role is filled by Glu388. Zn(2+) contacts are provided by His391 and Glu410. Tyr418 and Tyr423 each carry sulfotyrosine. 4 N-linked (GlcNAc...) asparagine glycosylation sites follow: Asn573, Asn606, Asn624, and Asn734. Cys760 and Cys767 are joined by a disulfide. 2 N-linked (GlcNAc...) asparagine glycosylation sites follow: Asn784 and Asn817. An intrachain disulfide couples Cys797 to Cys833. Tyr852 carries the post-translational modification Phosphotyrosine.

It belongs to the peptidase M1 family. In terms of assembly, homodimer. Interacts with SLC6A19. The cofactor is Zn(2+). N- and O-glycosylated. Post-translationally, sulfated. In terms of processing, may undergo proteolysis and give rise to a soluble form. Expressed in the intestinal brush border (at protein level). Highly expressed in intestinal tract and kidney, present in liver, lymph node, spleen, and brain. Found as well in monocytes, macrophages, dendritic cells, veiled cells and B-cells but not on T-cells and thymocytes.

The protein localises to the cell membrane. It catalyses the reaction Release of an N-terminal amino acid, Xaa-|-Yaa- from a peptide, amide or arylamide. Xaa is preferably Ala, but may be most amino acids including Pro (slow action). When a terminal hydrophobic residue is followed by a prolyl residue, the two may be released as an intact Xaa-Pro dipeptide.. In terms of biological role, broad specificity aminopeptidase which plays a role in the final digestion of peptides generated from hydrolysis of proteins by gastric and pancreatic proteases. Also involved in the processing of various peptides including peptide hormones, such as angiotensin III and IV, neuropeptides, and chemokines. May also be involved the cleavage of peptides bound to major histocompatibility complex class II molecules of antigen presenting cells. May have a role in angiogenesis and promote cholesterol crystallization. May have a role in amino acid transport by acting as binding partner of amino acid transporter SLC6A19 and regulating its activity. The polypeptide is Aminopeptidase N (Anpep) (Mus musculus (Mouse)).